Here is a 278-residue protein sequence, read N- to C-terminus: Formamidopyrimidine-DNA glycosylase (278 aa).

The Schiff-base intermediate with DNA role is filled by proline 2. Catalysis depends on glutamate 3, which acts as the Proton donor. The active-site Proton donor; for beta-elimination activity is the lysine 57. DNA is bound by residues histidine 90, arginine 109, and lysine 150. The FPG-type zinc finger occupies 235–269; it reads QVYGRAGEPCRQCGHPIEIAKHGQRSTFFCRHCQF. Catalysis depends on arginine 259, which acts as the Proton donor; for delta-elimination activity.

The protein belongs to the FPG family. Monomer. Zn(2+) serves as cofactor.

The catalysed reaction is Hydrolysis of DNA containing ring-opened 7-methylguanine residues, releasing 2,6-diamino-4-hydroxy-5-(N-methyl)formamidopyrimidine.. It carries out the reaction 2'-deoxyribonucleotide-(2'-deoxyribose 5'-phosphate)-2'-deoxyribonucleotide-DNA = a 3'-end 2'-deoxyribonucleotide-(2,3-dehydro-2,3-deoxyribose 5'-phosphate)-DNA + a 5'-end 5'-phospho-2'-deoxyribonucleoside-DNA + H(+). Involved in base excision repair of DNA damaged by oxidation or by mutagenic agents. Acts as a DNA glycosylase that recognizes and removes damaged bases. Has a preference for oxidized purines, such as 7,8-dihydro-8-oxoguanine (8-oxoG). Has AP (apurinic/apyrimidinic) lyase activity and introduces nicks in the DNA strand. Cleaves the DNA backbone by beta-delta elimination to generate a single-strand break at the site of the removed base with both 3'- and 5'-phosphates. The protein is Formamidopyrimidine-DNA glycosylase of Yersinia pestis (strain Pestoides F).